Consider the following 132-residue polypeptide: UPF0292 protein PYRAB04740 (132 aa).

A Toprim domain is found at 20–100; the sequence is DGAIIVEGPR…KVDTETRRSL (81 aa). Mg(2+) is bound by residues Glu26, Asp69, and Asp71.

Belongs to the UPF0292 family. Mg(2+) is required as a cofactor.

The chain is UPF0292 protein PYRAB04740 from Pyrococcus abyssi (strain GE5 / Orsay).